The primary structure comprises 100 residues: MAKKSMIARDVKRKKLVERYAAKRKSLIEAFKSAKDPMERLEIHRKIQALPRNCAPNRIRNRCWATGKPRGVYRDFGLCRNQLRSRAHNGELPGVVKSSW.

The protein belongs to the universal ribosomal protein uS14 family. As to quaternary structure, part of the 30S ribosomal subunit. Contacts proteins S3 and S10.

Binds 16S rRNA, required for the assembly of 30S particles and may also be responsible for determining the conformation of the 16S rRNA at the A site. The polypeptide is Small ribosomal subunit protein uS14 (Prochlorococcus marinus (strain NATL2A)).